The primary structure comprises 233 residues: Small ribosomal subunit protein uS7m (233 aa).

The N-terminal 28 residues, 1–28, are a transit peptide targeting the mitochondrion; sequence MAAPTGKLLVHRIRAGLTCLTQVRWSRY.

Belongs to the universal ribosomal protein uS7 family. As to quaternary structure, component of the mitochondrial ribosome small subunit (28S) which comprises a 12S rRNA and about 30 distinct proteins.

It is found in the mitochondrion. This Xenopus laevis (African clawed frog) protein is Small ribosomal subunit protein uS7m (mrps7).